Reading from the N-terminus, the 512-residue chain is Keratin, type I cytoskeletal 24 (512 aa).

Residues 1–21 form a disordered region; it reads MFCSAQKGSCSSRVSSSGAVG. The segment at 1–140 is head; sequence MFCSAQKGSC…GYDGGLLSGS (140 aa). Low complexity predominate over residues 8–21; sequence GSCSSRVSSSGAVG. Residues 141–176 are coil 1A; sequence EKQTMQDLNDRLANYLDKVRALEEANTDLECKIKDW. The 315-residue stretch at 141–455 folds into the IF rod domain; sequence EKQTMQDLND…RLLNGDGGGC (315 aa). The linker 1 stretch occupies residues 177 to 197; the sequence is YGKHGSVKGGSGRDYSQYYSI. The tract at residues 198-289 is coil 1B; it reads IEDLKKQILS…KNHEEEMKCM (92 aa). The segment at 290-312 is linker 12; the sequence is QGSSGGDVTVEMNAAPGVDLTKL. Residues 313–451 are coil 2; that stretch reads LNDMRAQYEA…ETYRRLLNGD (139 aa). A tail region spans residues 452–512; it reads GGGCDYRNLV…VSNISEVKIK (61 aa).

This sequence belongs to the intermediate filament family. Heterotetramer of two type I and two type II keratins.

The polypeptide is Keratin, type I cytoskeletal 24 (Krt24) (Mus musculus (Mouse)).